We begin with the raw amino-acid sequence, 353 residues long: uncharacterized protein (353 aa).

Zn(2+)-binding residues include cysteine 40, histidine 70, cysteine 100, cysteine 103, cysteine 106, cysteine 114, and cysteine 158.

The protein belongs to the zinc-containing alcohol dehydrogenase family. Zn(2+) is required as a cofactor.

This is an uncharacterized protein from Escherichia coli (strain K12).